Reading from the N-terminus, the 648-residue chain is Acetyl-coenzyme A synthetase (648 aa).

CoA-binding positions include 190–193 (RGGR) and T310. ATP-binding positions include 386–388 (GEP), 410–415 (DTWWQT), D499, and R514. A CoA-binding site is contributed by S522. R525 is a binding site for ATP. V536, H538, and V541 together coordinate Mg(2+). CoA is bound at residue R583. An N6-acetyllysine modification is found at K608.

This sequence belongs to the ATP-dependent AMP-binding enzyme family. Mg(2+) is required as a cofactor. Post-translationally, acetylated. Deacetylation by the SIR2-homolog deacetylase activates the enzyme.

It carries out the reaction acetate + ATP + CoA = acetyl-CoA + AMP + diphosphate. Catalyzes the conversion of acetate into acetyl-CoA (AcCoA), an essential intermediate at the junction of anabolic and catabolic pathways. AcsA undergoes a two-step reaction. In the first half reaction, AcsA combines acetate with ATP to form acetyl-adenylate (AcAMP) intermediate. In the second half reaction, it can then transfer the acetyl group from AcAMP to the sulfhydryl group of CoA, forming the product AcCoA. The protein is Acetyl-coenzyme A synthetase of Methylobacterium radiotolerans (strain ATCC 27329 / DSM 1819 / JCM 2831 / NBRC 15690 / NCIMB 10815 / 0-1).